The chain runs to 282 residues: HTH-type transcriptional activator RhaR (282 aa).

In terms of domain architecture, HTH araC/xylS-type spans 179 to 277; sequence DKLITRLAAS…GMTPSQWRHL (99 aa). 2 consecutive DNA-binding regions (H-T-H motif) follow at residues 196–217 and 244–267; these read DKFCDEASCSERVLRQQFRQQT and ISDISTECGFEDSNYFSVVFTRET.

In terms of assembly, binds DNA as a dimer.

The protein resides in the cytoplasm. In terms of biological role, activates expression of the rhaSR operon in response to L-rhamnose. This Escherichia coli O139:H28 (strain E24377A / ETEC) protein is HTH-type transcriptional activator RhaR.